The sequence spans 396 residues: Tryptophan synthase beta chain (396 aa).

An N6-(pyridoxal phosphate)lysine modification is found at lysine 86.

This sequence belongs to the TrpB family. In terms of assembly, tetramer of two alpha and two beta chains. It depends on pyridoxal 5'-phosphate as a cofactor.

It catalyses the reaction (1S,2R)-1-C-(indol-3-yl)glycerol 3-phosphate + L-serine = D-glyceraldehyde 3-phosphate + L-tryptophan + H2O. It functions in the pathway amino-acid biosynthesis; L-tryptophan biosynthesis; L-tryptophan from chorismate: step 5/5. The beta subunit is responsible for the synthesis of L-tryptophan from indole and L-serine. The polypeptide is Tryptophan synthase beta chain (Serratia proteamaculans (strain 568)).